The primary structure comprises 389 residues: Putative F-box protein At3g10240 (389 aa).

Residues 1–26 (MEQQEEKRKIKAYQRKSKRSKSGSSS) are disordered. Basic residues predominate over residues 9–21 (KIKAYQRKSKRSK). The F-box domain maps to 21-66 (KSGSSSIPLDLVSEILLRLPEKSVARFRCVSKPWSSITTEPYFINL).

This is Putative F-box protein At3g10240 from Arabidopsis thaliana (Mouse-ear cress).